An 89-amino-acid polypeptide reads, in one-letter code: uncharacterized protein (89 aa).

The signal sequence occupies residues 1 to 27; sequence MKKAAAVLLSLGLVFGFSYGAGHVAEA.

This is an uncharacterized protein from Bacillus subtilis (strain 168).